We begin with the raw amino-acid sequence, 119 residues long: Holo-[acyl-carrier-protein] synthase (119 aa).

Mg(2+) contacts are provided by D8 and E58.

The protein belongs to the P-Pant transferase superfamily. AcpS family. The cofactor is Mg(2+).

Its subcellular location is the cytoplasm. The catalysed reaction is apo-[ACP] + CoA = holo-[ACP] + adenosine 3',5'-bisphosphate + H(+). Functionally, transfers the 4'-phosphopantetheine moiety from coenzyme A to a Ser of acyl-carrier-protein. The chain is Holo-[acyl-carrier-protein] synthase from Streptococcus thermophilus (strain CNRZ 1066).